The primary structure comprises 834 residues: DNA polymerase I, thermostable (834 aa).

The 87-residue stretch at K176–Q262 folds into the 5'-3' exonuclease domain. Residues E412–G834 are polymerase.

The protein belongs to the DNA polymerase type-A family.

The catalysed reaction is DNA(n) + a 2'-deoxyribonucleoside 5'-triphosphate = DNA(n+1) + diphosphate. Its function is as follows. Has 5'-3' exonuclease activity and no 3'-5' exonuclease activity. The protein is DNA polymerase I, thermostable (polA) of Thermus caldophilus.